A 378-amino-acid polypeptide reads, in one-letter code: Chaperone protein DnaJ (378 aa).

The 66-residue stretch at 5–70 folds into the J domain; the sequence is DYYEVLGVAK…QKRAAYDQYG (66 aa). The segment at 138-216 adopts a CR-type zinc-finger fold; it reads GYDTQIRVPS…CHGSGKVKET (79 aa). Cysteine 151, cysteine 154, cysteine 168, cysteine 171, cysteine 190, cysteine 193, cysteine 204, and cysteine 207 together coordinate Zn(2+). CXXCXGXG motif repeat units follow at residues 151 to 158, 168 to 175, 190 to 197, and 204 to 211; these read CEVCHGSG, CPTCHGQG, CPKCHGTG, and CVHCHGSG.

Belongs to the DnaJ family. As to quaternary structure, homodimer. Zn(2+) is required as a cofactor.

The protein localises to the cytoplasm. Functionally, participates actively in the response to hyperosmotic and heat shock by preventing the aggregation of stress-denatured proteins and by disaggregating proteins, also in an autonomous, DnaK-independent fashion. Unfolded proteins bind initially to DnaJ; upon interaction with the DnaJ-bound protein, DnaK hydrolyzes its bound ATP, resulting in the formation of a stable complex. GrpE releases ADP from DnaK; ATP binding to DnaK triggers the release of the substrate protein, thus completing the reaction cycle. Several rounds of ATP-dependent interactions between DnaJ, DnaK and GrpE are required for fully efficient folding. Also involved, together with DnaK and GrpE, in the DNA replication of plasmids through activation of initiation proteins. The polypeptide is Chaperone protein DnaJ (Burkholderia ambifaria (strain MC40-6)).